The sequence spans 347 residues: Probable RNA methyltransferase azo0122 (347 aa).

Catalysis depends on Glu-89, which acts as the Proton acceptor. Positions Leu-92–Asp-318 constitute a Radical SAM core domain. Cys-99 and Cys-323 are disulfide-bonded. Positions 106, 110, and 113 each coordinate [4Fe-4S] cluster. Residues Gly-151–Glu-152, Ser-181, Ser-204–His-206, and Asn-280 each bind S-adenosyl-L-methionine. Residue Cys-323 is the S-methylcysteine intermediate of the active site.

Belongs to the radical SAM superfamily. RlmN family. [4Fe-4S] cluster serves as cofactor.

Its subcellular location is the cytoplasm. The chain is Probable RNA methyltransferase azo0122 from Azoarcus sp. (strain BH72).